The primary structure comprises 573 residues: 60 kDa lysophospholipase (573 aa).

In terms of domain architecture, Asparaginase/glutaminase spans 9 to 355; the sequence is RRLLAVYTGG…DVRKELLTKD (347 aa). Threonine 19 acts as the Acyl-ester intermediate in catalysis. The tract at residues 41–350 is asparaginase; sequence TLPMFHDEEH…PGLSLDVRKE (310 aa). Substrate contacts are provided by residues 84 to 86 and 116 to 117; these read DSS and TD. ANK repeat units lie at residues 141–170, 399–429, 433–462, 466–495, and 533–562; these read GAQVPIHALWSDGRENLLGALLMAGQYVIP, ALVPSLACAAAHAGDVEALQALVELGSDLGL, NGQTPLHAAARGGHTEAVTMLLQRGVDVNT, DGFSPLLLAVRGRHPGVIGLLREAGASLST, and DGHSALHVAEAAGNLAVVAFLQSLEGAVGA.

In the N-terminal section; belongs to the asparaginase 1 family. As to quaternary structure, monomer.

The enzyme catalyses a 1-acyl-sn-glycero-3-phosphocholine + H2O = sn-glycerol 3-phosphocholine + a fatty acid + H(+). It catalyses the reaction L-asparagine + H2O = L-aspartate + NH4(+). It carries out the reaction a 1-O-alkyl-2-acetyl-sn-glycero-3-phosphocholine + H2O = a 1-O-alkyl-sn-glycero-3-phosphocholine + acetate + H(+). The catalysed reaction is 1-hexadecanoyl-sn-glycero-3-phosphocholine + H2O = sn-glycerol 3-phosphocholine + hexadecanoate + H(+). The enzyme catalyses 2 1-hexadecanoyl-sn-glycero-3-phosphocholine = 1,2-dihexadecanoyl-sn-glycero-3-phosphocholine + sn-glycerol 3-phosphocholine. It catalyses the reaction 1-octadecanoyl-sn-glycero-3-phosphocholine + H2O = octadecanoate + sn-glycerol 3-phosphocholine + H(+). It carries out the reaction 1-(9Z-octadecenoyl)-sn-glycero-3-phosphocholine + H2O = sn-glycerol 3-phosphocholine + (9Z)-octadecenoate + H(+). The catalysed reaction is 1-hexadecanoyl-sn-glycero-3-phosphoethanolamine + H2O = sn-glycero-3-phosphoethanolamine + hexadecanoate + H(+). The enzyme catalyses 1-(9Z-octadecenoyl)-sn-glycero-3-phosphoethanolamine + H2O = sn-glycero-3-phosphoethanolamine + (9Z)-octadecenoate + H(+). It catalyses the reaction 1-hexadecanoyl-sn-glycero-3-phosphoethanolamine + 1-hexadecanoyl-sn-glycero-3-phosphocholine = 1,2-dihexadecanoyl-sn-glycero-3-phosphoethanolamine + sn-glycerol 3-phosphocholine. It carries out the reaction 2-(5Z,8Z,11Z,14Z)-eicosatetraenoyl-sn-glycero-3-phosphocholine + H2O = sn-glycerol 3-phosphocholine + (5Z,8Z,11Z,14Z)-eicosatetraenoate + H(+). The catalysed reaction is 2-hexadecanoyl-sn-glycero-3-phosphocholine + H2O = sn-glycerol 3-phosphocholine + hexadecanoate + H(+). The enzyme catalyses 2 2-hexadecanoyl-sn-glycero-3-phosphocholine = 1,2-dihexadecanoyl-sn-glycero-3-phosphocholine + sn-glycerol 3-phosphocholine. It catalyses the reaction 1-O-(9Z)-octadecenoyl-2-O-acetyl-sn-glycero-3-phosphocholine + H2O = 2-acetyl-sn-glycero-3-phosphocholine + (9Z)-octadecenoate + H(+). It carries out the reaction a 1-acyl-sn-glycero-3-phospho-(1D-myo-inositol) + 1-hexadecanoyl-sn-glycero-3-phosphocholine = a 1-acyl-2-hexadecanoyl-sn-glycero-3-phospho-(1D-myo-inositol) + sn-glycerol 3-phosphocholine. The catalysed reaction is 2 2-(5Z,8Z,11Z,14Z)-eicosatetraenoyl-sn-glycero-3-phosphocholine = 1,2-di-(5Z,8Z,11Z,14Z-eicosatetraenoyl)-sn-glycero-3-phosphocholine + sn-glycerol 3-phosphocholine. Its function is as follows. Exhibits lysophospholipase, transacylase, PAF acetylhydrolase and asparaginase activities. Can catalyze three types of transacylation reactions: (1) acyl transfer from 1-acyl-sn-glycero-3-phosphocholine (1-acyl-GPC) to the sn-1(3) positions of glycerol and 2-acylglycerol (sn-1 to -1(3) transfer), (2) acyl transfer from 1-acyl-GPC to the sn-2 positions of 1-acyl-GPC, 1-acyl-sn-glycero-3-phosphoethanolamine (1-acyl-GPE), and other lysophospholipids (sn-1 to -2 transfer) and (3) acyl transfer from 2-acyl-GPC to the sn-1 position of 2-acyl-GPC and 2-acyl-GPE (sn-2 to -1 transfer). Mediates the synthesis of 1-arachidonoyl species of phospholipids by transferring the arachidonoyl residue from 2-arachidonoyl lysophospholipid to the sn-1 position of 2-acyl lysophospholipid. This is 60 kDa lysophospholipase (ASPG) from Homo sapiens (Human).